A 116-amino-acid polypeptide reads, in one-letter code: Guanylin (116 aa).

Residues 1 to 23 form the signal peptide; sequence MNACVLSVLCLLGALAVLVEGVT. Positions 24-101 are excised as a propeptide; that stretch reads VQDGDLSFPL…LQRLEAIAQD (78 aa). 3 disulfides stabilise this stretch: Cys-69/Cys-83, Cys-105/Cys-113, and Cys-108/Cys-116.

The protein belongs to the guanylin family. Localized in both crypts and villi in the small intestine and to superficial epithelial cells in the colon.

The protein resides in the secreted. In terms of biological role, endogenous activator of intestinal guanylate cyclase. It stimulates this enzyme through the same receptor binding region as the heat-stable enterotoxins. In Mus musculus (Mouse), this protein is Guanylin (Guca2a).